A 416-amino-acid chain; its full sequence is Cotranscriptional regulator ARB2A homolog (416 aa).

Residues 1–23 (MHFYFNVLNLLTVWVMMAQLQQG) form the signal peptide. The disordered stretch occupies residues 211 to 248 (AQVQLSSDSSDEPAEKRERKDKIQKETKKRRDFYEKYR). Basic and acidic residues predominate over residues 223–236 (PAEKRERKDKIQKE). Catalysis depends on serine 293, which acts as the Nucleophile. Residue asparagine 397 is glycosylated (N-linked (GlcNAc...) asparagine).

Belongs to the ARB2A family.

Its subcellular location is the nucleus. The protein resides in the cytoplasm. Its function is as follows. May play role in the regulation of alternative splicing. May have hydrolase activity. This chain is Cotranscriptional regulator ARB2A homolog (ARB2A), found in Gallus gallus (Chicken).